The chain runs to 236 residues: Large ribosomal subunit protein uL2 (236 aa).

Residues 1 to 10 (MGHRITTQSR) are compositionally biased toward polar residues. 2 disordered regions span residues 1-20 (MGHRITTQSRGHGGPTYRAP) and 202-236 (GGGGHQHAGRPKTVSRGTSPGRKVGHIAARRTGRR). The span at 224 to 236 (KVGHIAARRTGRR) shows a compositional bias: basic residues.

It belongs to the universal ribosomal protein uL2 family. In terms of assembly, part of the 50S ribosomal subunit. Forms a bridge to the 30S subunit in the 70S ribosome.

In terms of biological role, one of the primary rRNA binding proteins. Required for association of the 30S and 50S subunits to form the 70S ribosome, for tRNA binding and peptide bond formation. It has been suggested to have peptidyltransferase activity; this is somewhat controversial. Makes several contacts with the 16S rRNA in the 70S ribosome. In Methanospirillum hungatei JF-1 (strain ATCC 27890 / DSM 864 / NBRC 100397 / JF-1), this protein is Large ribosomal subunit protein uL2.